A 346-amino-acid chain; its full sequence is Dihydroorotase (346 aa).

Residues histidine 13 and histidine 15 each coordinate Zn(2+). Substrate contacts are provided by residues 15–17 and asparagine 41; that span reads HLR. Residues lysine 99, histidine 136, and histidine 174 each contribute to the Zn(2+) site. Lysine 99 bears the N6-carboxylysine mark. Histidine 136 lines the substrate pocket. Leucine 219 contributes to the substrate binding site. Residue aspartate 247 coordinates Zn(2+). Aspartate 247 is an active-site residue. The substrate site is built by histidine 251 and alanine 263.

It belongs to the metallo-dependent hydrolases superfamily. DHOase family. Class II DHOase subfamily. Homodimer. It depends on Zn(2+) as a cofactor.

It catalyses the reaction (S)-dihydroorotate + H2O = N-carbamoyl-L-aspartate + H(+). It functions in the pathway pyrimidine metabolism; UMP biosynthesis via de novo pathway; (S)-dihydroorotate from bicarbonate: step 3/3. Its function is as follows. Catalyzes the reversible cyclization of carbamoyl aspartate to dihydroorotate. This Rhizobium rhizogenes (strain K84 / ATCC BAA-868) (Agrobacterium radiobacter) protein is Dihydroorotase.